The chain runs to 130 residues: Small ribosomal subunit protein uS9 (130 aa).

The protein belongs to the universal ribosomal protein uS9 family.

In Streptococcus gordonii (strain Challis / ATCC 35105 / BCRC 15272 / CH1 / DL1 / V288), this protein is Small ribosomal subunit protein uS9.